The following is a 335-amino-acid chain: Beta-hexosaminidase (335 aa).

Substrate is bound by residues aspartate 60, arginine 68, arginine 133, and 163 to 164 (KH). The active-site Proton donor/acceptor is the histidine 176. Aspartate 247 (nucleophile) is an active-site residue.

Belongs to the glycosyl hydrolase 3 family. NagZ subfamily. In terms of assembly, monomer.

The protein resides in the cytoplasm. It catalyses the reaction Hydrolysis of terminal non-reducing N-acetyl-D-hexosamine residues in N-acetyl-beta-D-hexosaminides.. It functions in the pathway cell wall biogenesis; peptidoglycan recycling. Its function is as follows. Plays a role in peptidoglycan recycling by cleaving the terminal beta-1,4-linked N-acetylglucosamine (GlcNAc) from peptide-linked peptidoglycan fragments, giving rise to free GlcNAc, anhydro-N-acetylmuramic acid and anhydro-N-acetylmuramic acid-linked peptides. The sequence is that of Beta-hexosaminidase from Xylella fastidiosa (strain 9a5c).